The following is a 224-amino-acid chain: Ribose-5-phosphate isomerase A (224 aa).

Substrate is bound by residues 32–35 (TGST), 85–88 (DGAD), and 98–101 (KGGG). Glu107 functions as the Proton acceptor in the catalytic mechanism. A substrate-binding site is contributed by Lys125.

This sequence belongs to the ribose 5-phosphate isomerase family. In terms of assembly, homodimer.

The enzyme catalyses aldehydo-D-ribose 5-phosphate = D-ribulose 5-phosphate. It participates in carbohydrate degradation; pentose phosphate pathway; D-ribose 5-phosphate from D-ribulose 5-phosphate (non-oxidative stage): step 1/1. In terms of biological role, catalyzes the reversible conversion of ribose-5-phosphate to ribulose 5-phosphate. The polypeptide is Ribose-5-phosphate isomerase A (Pseudomonas putida (strain W619)).